The chain runs to 73 residues: Translation initiation factor IF-1 (73 aa).

The S1-like domain maps to 1–73 (MAKKDGVIEI…TRGRIVYRYK (73 aa)).

The protein belongs to the IF-1 family. Component of the 30S ribosomal translation pre-initiation complex which assembles on the 30S ribosome in the order IF-2 and IF-3, IF-1 and N-formylmethionyl-tRNA(fMet); mRNA recruitment can occur at any time during PIC assembly.

The protein resides in the cytoplasm. Functionally, one of the essential components for the initiation of protein synthesis. Stabilizes the binding of IF-2 and IF-3 on the 30S subunit to which N-formylmethionyl-tRNA(fMet) subsequently binds. Helps modulate mRNA selection, yielding the 30S pre-initiation complex (PIC). Upon addition of the 50S ribosomal subunit IF-1, IF-2 and IF-3 are released leaving the mature 70S translation initiation complex. The protein is Translation initiation factor IF-1 of Clavibacter michiganensis subsp. michiganensis (strain NCPPB 382).